The chain runs to 299 residues: 4-diphosphocytidyl-2-C-methyl-D-erythritol kinase (299 aa).

Lysine 17 is a catalytic residue. 99–109 is an ATP binding site; it reads PLASGLGGGSS. Aspartate 142 is a catalytic residue.

It belongs to the GHMP kinase family. IspE subfamily.

The enzyme catalyses 4-CDP-2-C-methyl-D-erythritol + ATP = 4-CDP-2-C-methyl-D-erythritol 2-phosphate + ADP + H(+). It functions in the pathway isoprenoid biosynthesis; isopentenyl diphosphate biosynthesis via DXP pathway; isopentenyl diphosphate from 1-deoxy-D-xylulose 5-phosphate: step 3/6. Its function is as follows. Catalyzes the phosphorylation of the position 2 hydroxy group of 4-diphosphocytidyl-2C-methyl-D-erythritol. In Deinococcus radiodurans (strain ATCC 13939 / DSM 20539 / JCM 16871 / CCUG 27074 / LMG 4051 / NBRC 15346 / NCIMB 9279 / VKM B-1422 / R1), this protein is 4-diphosphocytidyl-2-C-methyl-D-erythritol kinase.